Here is a 201-residue protein sequence, read N- to C-terminus: MNTLYLGSNSPRRMEILTQLGYQVVKLPANIDETVRQNEDPARYVQRMAEEKNRTALTLFCETNGTMPDFPLITADTCVVSAGIILGKPHSQAEAIEFLNRLSGKQHTVLTAVCIHYRGNAENRVQTNRVVFKPLSSEEISAYVQSGEPMDKAGAYAVQGIGSIFIQSIEGSFSGIMGLPVYETVSMLQDLGYRTPPFIRA.

Asp-76 serves as the catalytic Proton acceptor.

Belongs to the Maf family. YhdE subfamily. Requires a divalent metal cation as cofactor.

The protein localises to the cytoplasm. It carries out the reaction dTTP + H2O = dTMP + diphosphate + H(+). The catalysed reaction is UTP + H2O = UMP + diphosphate + H(+). Nucleoside triphosphate pyrophosphatase that hydrolyzes dTTP and UTP. May have a dual role in cell division arrest and in preventing the incorporation of modified nucleotides into cellular nucleic acids. This Neisseria meningitidis serogroup A / serotype 4A (strain DSM 15465 / Z2491) protein is dTTP/UTP pyrophosphatase.